The primary structure comprises 310 residues: Cytochrome f (310 aa).

The first 27 residues, 1–27, serve as a signal peptide directing secretion; sequence MRRILTFFLGSIIIGLSIIISPSSSFA. Tyr-28, Cys-48, Cys-51, and His-52 together coordinate heme. A helical membrane pass occupies residues 277 to 297; sequence VIGLIAFFAGVALTQILLVLK.

It belongs to the cytochrome f family. In terms of assembly, the 4 large subunits of the cytochrome b6-f complex are cytochrome b6, subunit IV (17 kDa polypeptide, PetD), cytochrome f and the Rieske protein, while the 4 small subunits are PetG, PetL, PetM and PetN. The complex functions as a dimer. Heme serves as cofactor.

It is found in the cellular thylakoid membrane. Component of the cytochrome b6-f complex, which mediates electron transfer between photosystem II (PSII) and photosystem I (PSI), cyclic electron flow around PSI, and state transitions. This is Cytochrome f from Prochlorococcus marinus (strain SARG / CCMP1375 / SS120).